The chain runs to 212 residues: Glycerol-3-phosphate acyltransferase (212 aa).

A run of 5 helical transmembrane segments spans residues 3–23 (ILLAALVAYLIGSVSFAVVVS), 51–71 (KAAILTLVGDAFKGWLAVWLA), 78–98 (DVAVAWVAIAVFLGHLYPVFF), 115–135 (AVHPVLGLATALTWLIVAFFF), and 139–159 (SLAALVAAVFAPLFDVFLFGT).

This sequence belongs to the PlsY family. Probably interacts with PlsX.

The protein resides in the cell inner membrane. The enzyme catalyses an acyl phosphate + sn-glycerol 3-phosphate = a 1-acyl-sn-glycero-3-phosphate + phosphate. Its pathway is lipid metabolism; phospholipid metabolism. Its function is as follows. Catalyzes the transfer of an acyl group from acyl-phosphate (acyl-PO(4)) to glycerol-3-phosphate (G3P) to form lysophosphatidic acid (LPA). This enzyme utilizes acyl-phosphate as fatty acyl donor, but not acyl-CoA or acyl-ACP. The sequence is that of Glycerol-3-phosphate acyltransferase from Burkholderia ambifaria (strain MC40-6).